The following is a 302-amino-acid chain: MSKLLYVRDHEGFACLTVETHRNRWFAAHIVLTKDCGCLKLLNERDLEFYKFLFTFLAMAEKLVNFNIDELVTSFESHDIDHYYTEQKAMENVHGETYANILNMLFDGDRAAMNAYAEAIMADEALQAKISWLRDKVAAAVTLPEKILVFLLIEGIFFISSFYSIALLRVRGLMPGICLANNYISRDELLHTRAASLLYNSMTAKADRPRATWIQELFRTAVEVETAFIEARGEGVTLVDVRAIKQFLEATADRILGDIGQAPLYGTPPPKDCPLTYMTSIKQTNFFEQESSDYTMLVVDDL.

Residues Glu-61, Glu-91, and His-94 each coordinate Fe cation. Tyr-98 is an active-site residue. The chain crosses the membrane as a helical span at residues 147–167 (ILVFLLIEGIFFISSFYSIAL). Residues Glu-154, Glu-188, and His-191 each coordinate Fe cation.

The protein belongs to the ribonucleoside diphosphate reductase small chain family. In terms of assembly, heterotetramer composed of a homodimer of the large subunit (R1) and a homodimer of the small subunit (R2). Larger multisubunit protein complex are also active, composed of (R1)n(R2)n. Fe cation serves as cofactor.

The protein resides in the host membrane. It catalyses the reaction a 2'-deoxyribonucleoside 5'-diphosphate + [thioredoxin]-disulfide + H2O = a ribonucleoside 5'-diphosphate + [thioredoxin]-dithiol. Functionally, ribonucleoside-diphosphate reductase holoenzyme provides the precursors necessary for viral DNA synthesis. Allows virus growth in non-dividing cells, as well as reactivation from latency in infected hosts. Catalyzes the biosynthesis of deoxyribonucleotides from the corresponding ribonucleotides. The sequence is that of Ribonucleoside-diphosphate reductase small subunit from Homo sapiens (Human).